The chain runs to 521 residues: GMP synthase [glutamine-hydrolyzing] (521 aa).

The 199-residue stretch at 5–203 (KILILDFGSQ…VHEICGCGRD (199 aa)) folds into the Glutamine amidotransferase type-1 domain. Cys82 (nucleophile) is an active-site residue. Residues His177 and Glu179 contribute to the active site. The region spanning 204–396 (WNMPDYVNEA…LGLPHEMVYR (193 aa)) is the GMPS ATP-PPase domain. 231 to 237 (SGGVDSS) contributes to the ATP binding site.

As to quaternary structure, homodimer.

The enzyme catalyses XMP + L-glutamine + ATP + H2O = GMP + L-glutamate + AMP + diphosphate + 2 H(+). Its pathway is purine metabolism; GMP biosynthesis; GMP from XMP (L-Gln route): step 1/1. Its function is as follows. Catalyzes the synthesis of GMP from XMP. The chain is GMP synthase [glutamine-hydrolyzing] from Aromatoleum aromaticum (strain DSM 19018 / LMG 30748 / EbN1) (Azoarcus sp. (strain EbN1)).